The primary structure comprises 678 residues: NADPH--cytochrome P450 reductase (678 aa).

Residues 1-21 lie on the Lumenal side of the membrane; the sequence is MADSNMDAGTTTSEMVAEEVS. The helical transmembrane segment at 22 to 42 threads the bilayer; the sequence is LFSTTDVILFSLIVGVMTYWF. Topologically, residues 43 to 678 are cytoplasmic; sequence LFRKKKEEVP…KGRYSLDVWS (636 aa). S63 carries the post-translational modification Phosphoserine. In terms of domain architecture, Flavodoxin-like spans 80–224; the sequence is IIVFYGSQTG…DFITWREQFW (145 aa). FMN contacts are provided by residues 86–91, 138–141, 173–182, and D208; these read SQTGTA, ATYG, and LGNKTYEHFN. An FAD-binding FR-type domain is found at 279-521; that stretch reads KNPFLAVVTT…YVRKSQFRLP (243 aa). R298 is a binding site for NADP(+). FAD is bound by residues R424, 454 to 457, 472 to 474, Y478, and 488 to 491; these read RYYS, CAV, and GVAT. Residues T535, 596–597, 602–606, and D639 contribute to the NADP(+) site; these read SR and KVYVQ. W677 lines the FAD pocket.

The protein belongs to the NADPH--cytochrome P450 reductase family. This sequence in the N-terminal section; belongs to the flavodoxin family. In the C-terminal section; belongs to the flavoprotein pyridine nucleotide cytochrome reductase family. FAD serves as cofactor. The cofactor is FMN.

The protein localises to the endoplasmic reticulum membrane. The catalysed reaction is 2 oxidized [cytochrome P450] + NADPH = 2 reduced [cytochrome P450] + NADP(+) + H(+). This enzyme is required for electron transfer from NADP to cytochrome P450 in microsomes. It can also provide electron transfer to heme oxygenase and cytochrome B5. This is NADPH--cytochrome P450 reductase from Bos taurus (Bovine).